A 241-amino-acid polypeptide reads, in one-letter code: Fatty acid metabolism regulator protein (241 aa).

The HTH gntR-type domain occupies 11-79 (QSPAALAEEY…HGKPTKVNNI (69 aa)). Positions 39-58 (ERDLADKIGVTRTTLREVLQ) form a DNA-binding region, H-T-H motif.

In terms of assembly, homodimer.

It is found in the cytoplasm. Its function is as follows. Multifunctional regulator of fatty acid metabolism. In Haemophilus influenzae (strain PittEE), this protein is Fatty acid metabolism regulator protein.